The following is a 1035-amino-acid chain: Eukaryotic translation initiation factor 3 subunit A (1035 aa).

Residues Leu-92–Ala-121 adopt a coiled-coil conformation. The PCI domain occupies Met-339–Phe-523. Positions Glu-606–Glu-910 form a coiled coil. Composition is skewed to basic and acidic residues over residues Thr-619–Arg-632 and Lys-809–Leu-901. Disordered stretches follow at residues Thr-619–Ala-649 and Lys-809–Gln-1035. Composition is skewed to low complexity over residues Lys-943–Ala-953 and Pro-988–Pro-1004.

It belongs to the eIF-3 subunit A family. Component of the eukaryotic translation initiation factor 3 (eIF-3) complex.

The protein localises to the cytoplasm. Its function is as follows. RNA-binding component of the eukaryotic translation initiation factor 3 (eIF-3) complex, which is involved in protein synthesis of a specialized repertoire of mRNAs and, together with other initiation factors, stimulates binding of mRNA and methionyl-tRNAi to the 40S ribosome. The eIF-3 complex specifically targets and initiates translation of a subset of mRNAs involved in cell proliferation. This chain is Eukaryotic translation initiation factor 3 subunit A (tif32), found in Emericella nidulans (strain FGSC A4 / ATCC 38163 / CBS 112.46 / NRRL 194 / M139) (Aspergillus nidulans).